The following is a 550-amino-acid chain: Thioredoxin domain-containing protein 2 (550 aa).

The tract at residues 1–50 (MFKKNQKLSKDKGLEVNSVQAGAPEESDVKLNNGGKANERGSNEFLDTAQ) is disordered. Phosphoserine is present on residues Ser-42 and Ser-51. Positions 63–428 (MLHMSTEESE…IKSSEDVQPS (366 aa)) are disordered. 3 stretches are compositionally biased toward polar residues: residues 73–87 (PPQQVSSTSMFSENT), 96–105 (PKSSTKNTQL), and 112–140 (KTSSYSKQTNSSNIPKSLAITTYPKQGST). 22 tandem repeats follow at residues 104–118 (QLKQEDISKTSSYSK), 119–133 (QTNSSNIPKSLAITT), 134–148 (YPKQGSTLKPAANGT), 149–163 (HDREAEKPKSSEDLI), 164–178 (QSKKGDIFKPSEDSI), 179–193 (QSKKGDMPKSSEDPI), 194–208 (QSKKDDTAKSLEDTI), 209–223 (QSKNGDMPKSSEDPI), 224–238 (QSKKDDTARSLEDSI), 239–252 (QSKKGDMPKSSDTI), 253–267 (QSKESETPKFLQDTI), 268–282 (QSKGGKINKQVKDSM), 283–297 (KSKESKIRKPLKDSI), 298–312 (QSKENKIPKSSQDSA), 313–327 (QPKEGKIHKPLKDSL), 328–342 (PSKEGDISKPSEDTI), 343–357 (QAKEEITVSPEDTIQ), 358–384 (AKEEITMSPEDTIQAKEEITVSPEDTI), 385–399 (QAKEEITVSPEDTMQ), 400–412 (SKEEITVSPEDTV), 413–425 (QSQEGDIKSSEDV), and 426–440 (QPSENEIFPFEAEIE). The interval 104 to 440 (QLKQEDISKT…EIFPFEAEIE (337 aa)) is 22 X 15 AA approximate tandem repeat of Q-P-K-X-G-D-I-P-K-S-[PS]-E-[KE]-X-I. Composition is skewed to basic and acidic residues over residues 148–205 (THDR…KSLE), 217–259 (KSSE…ESET), 277–304 (QVKDSMKSKESKIRKPLKDSIQSKENKI), and 313–348 (QPKEGKIHKPLKDSLPSKEGDISKPSEDTIQAKEEI). A Phosphoserine modification is found at Ser-158. Phosphoserine is present on residues Ser-351 and Ser-379. The Thioredoxin domain maps to 401 to 550 (KEEITVSPED…KLEKSIAELK (150 aa)). Phosphoserine is present on Ser-407. An intrachain disulfide couples Cys-477 to Cys-480.

As to expression, testis-specific. Strongly expressed in the testicular seminiferous tubules, mostly in the round spermatids.

It is found in the cytoplasm. Probably plays a regulatory role in sperm development. May participate in regulation of fibrous sheath (FS) assembly by supporting the formation of disulfide bonds during sperm tail morphogenesis. May also be required to rectify incorrect disulfide pairing and generate suitable pairs between the FS constituents. Can reduce disulfide bonds in vitro in the presence of NADP and thioredoxin reductase. This chain is Thioredoxin domain-containing protein 2 (Txndc2), found in Rattus norvegicus (Rat).